Reading from the N-terminus, the 277-residue chain is S-formylglutathione hydrolase FrmB (277 aa).

Residues serine 145, aspartate 221, and histidine 254 each act as charge relay system in the active site.

It belongs to the esterase D family.

The enzyme catalyses S-formylglutathione + H2O = formate + glutathione + H(+). In terms of biological role, serine hydrolase involved in the detoxification of formaldehyde. Hydrolyzes S-formylglutathione to glutathione and formate. In Escherichia coli O6:K15:H31 (strain 536 / UPEC), this protein is S-formylglutathione hydrolase FrmB (frmB).